The chain runs to 1382 residues: Hepatocyte growth factor receptor (1382 aa).

The N-terminal stretch at 1–24 (MRAPAVLAPGILVLLFTLVQRSCG) is a signal peptide. Residues 25 to 933 (ECKEALVKSE…VIVQPDQNFT (909 aa)) are Extracellular-facing. Residues 27 to 516 (KEALVKSEMN…TGKKITKIPL (490 aa)) form the Sema domain. Residue asparagine 45 is glycosylated (N-linked (GlcNAc...) asparagine). 4 disulfides stabilise this stretch: cysteine 95-cysteine 101, cysteine 98-cysteine 160, cysteine 133-cysteine 141, and cysteine 173-cysteine 176. Asparagine 106 carries an N-linked (GlcNAc...) asparagine glycan. N-linked (GlcNAc...) asparagine glycosylation is found at asparagine 203 and asparagine 359. Intrachain disulfides connect cysteine 299–cysteine 364 and cysteine 386–cysteine 398. N-linked (GlcNAc...) asparagine glycosylation is found at asparagine 400 and asparagine 406. 4 cysteine pairs are disulfide-bonded: cysteine 521–cysteine 539, cysteine 527–cysteine 562, cysteine 530–cysteine 546, and cysteine 542–cysteine 552. 3 IPT/TIG domains span residues 564-656 (PTIY…FSYV), 658-740 (PIIT…FSYQ), and 743-837 (PIVY…LIYV). The O-linked (Man) threonine glycan is linked to threonine 583. Residues asparagine 608 and asparagine 636 are each glycosylated (N-linked (GlcNAc...) asparagine). O-linked (Man) threonine glycosylation is found at threonine 677 and threonine 762. Residues asparagine 786, asparagine 880, and asparagine 931 are each glycosylated (N-linked (GlcNAc...) asparagine). A helical membrane pass occupies residues 934-956 (GLIVGVISISLIVLLLLGLFLWL). Residues 957–1382 (KRRKQIKDLG…QDIIDGEGDT (426 aa)) are Cytoplasmic-facing. Serine 967 bears the Phosphoserine mark. The residue at position 978 (threonine 978) is a Phosphothreonine. 3 positions are modified to phosphoserine: serine 991, serine 998, and serine 1001. A Phosphotyrosine modification is found at tyrosine 1004. Residues 1079–1346 (VHFNEVIGRG…RISAIFSTFI (268 aa)) form the Protein kinase domain. Residues 1085–1093 (IGRGHFGCV) and lysine 1111 each bind ATP. Catalysis depends on aspartate 1205, which acts as the Proton acceptor. The interaction with RANBP9 stretch occupies residues 1213 to 1382 (LDEKFTVKVA…QDIIDGEGDT (170 aa)). Residue tyrosine 1231 is modified to Phosphotyrosine. Tyrosine 1235 and tyrosine 1236 each carry phosphotyrosine; by autocatalysis. The residue at position 1290 (threonine 1290) is a Phosphothreonine. Residues 1321–1360 (WHPKAELRPSFSELVSRISAIFSTFIGEHYVHVNATYVNV) form an interaction with MUC20 region. A phosphotyrosine; by autocatalysis mark is found at tyrosine 1350 and tyrosine 1357. Tyrosine 1366 bears the Phosphotyrosine mark.

It belongs to the protein kinase superfamily. Tyr protein kinase family. In terms of assembly, heterodimer made of an alpha chain (50 kDa) and a beta chain (145 kDa) which are disulfide linked. Binds PLXNB1. Interacts when phosphorylated with downstream effectors including STAT3, PIK3R1, SRC, PCLG1, GRB2 and GAB1. Interacts with SPSB1, SPSB2 and SPSB4. Interacts with INPP5D/SHIP1. When phosphorylated at Tyr-1357, interacts with INPPL1/SHIP2. Interacts with RANBP9 and RANBP10, as well as SPSB1, SPSB2, SPSB3 and SPSB4. SPSB1 binding occurs in the presence and in the absence of HGF, however HGF treatment has a positive effect on this interaction. Interacts with MUC20; prevents interaction with GRB2 and suppresses hepatocyte growth factor-induced cell proliferation. Interacts with GRB10. Interacts with PTPN1 and PTPN2. Interacts with HSP90AA1 and HSP90AB1; the interaction suppresses MET kinase activity. Interacts with tensin TNS3. Interacts (when phosphorylated) with tensin TNS4 (via SH2 domain); the interaction increases MET protein stability by inhibiting MET endocytosis and subsequent lysosomal degradation. Autophosphorylated in response to ligand binding on Tyr-1235 and Tyr-1236 in the kinase domain leading to further phosphorylation of Tyr-1350 and Tyr-1357 in the C-terminal multifunctional docking site. Dephosphorylated by PTPRJ at Tyr-1350 and Tyr-1366. Dephosphorylated by PTPN1 and PTPN2. In terms of processing, ubiquitinated. Ubiquitination by CBL regulates the receptor stability and activity through proteasomal degradation. Post-translationally, O-mannosylation of IPT/TIG domains by TMEM260 is required for protein maturation. O-mannosylated residues are composed of single mannose glycans that are not elongated or modified.

It localises to the membrane. The catalysed reaction is L-tyrosyl-[protein] + ATP = O-phospho-L-tyrosyl-[protein] + ADP + H(+). With respect to regulation, in its inactive state, the C-terminal tail interacts with the catalytic domain and inhibits the kinase activity. Upon ligand binding, the C-terminal tail is displaced and becomes phosphorylated, thus increasing the kinase activity. Its function is as follows. Receptor tyrosine kinase that transduces signals from the extracellular matrix into the cytoplasm by binding to hepatocyte growth factor/HGF ligand. Regulates many physiological processes including proliferation, scattering, morphogenesis and survival. Ligand binding at the cell surface induces autophosphorylation of MET on its intracellular domain that provides docking sites for downstream signaling molecules. Following activation by ligand, interacts with the PI3-kinase subunit PIK3R1, PLCG1, SRC, GRB2, STAT3 or the adapter GAB1. Recruitment of these downstream effectors by MET leads to the activation of several signaling cascades including the RAS-ERK, PI3 kinase-AKT, or PLCgamma-PKC. The RAS-ERK activation is associated with the morphogenetic effects while PI3K/AKT coordinates prosurvival effects. During embryonic development, MET signaling plays a role in gastrulation, development and migration of muscles and neuronal precursors, angiogenesis and kidney formation. In adults, participates in wound healing as well as organ regeneration and tissue remodeling. Also promotes differentiation and proliferation of hematopoietic cells. This Mustela putorius furo (European domestic ferret) protein is Hepatocyte growth factor receptor (MET).